The sequence spans 1641 residues: Cortactin-binding protein 2 (1641 aa).

The tract at residues 1-27 (MATDGASCEPDFSRAPEDAAGAPAEAA) is disordered. Positions 119–276 (RKMQERMSTQ…EQLKRGNDSK (158 aa)) form a coiled coil. Disordered stretches follow at residues 361 to 433 (SHGD…HPGL), 446 to 472 (GSNA…PTSR), and 488 to 588 (ALSR…PQGN). A compositionally biased stretch (polar residues) spans 385-405 (GPSTGSTPDLTSSPTALPSTV). R491 bears the Asymmetric dimethylarginine mark. The segment covering 497 to 506 (AGAPPRPGAP) has biased composition (pro residues). Residues 576-586 (TVASSPSSLPQ) show a composition bias toward polar residues. ANK repeat units lie at residues 702–732 (GRPT…DINY), 736–765 (DGHS…QVNA), 769–798 (NGFT…NINH), 802–831 (GGQT…DRSV), 835–864 (DGWT…PAHG), and 903–933 (EGWT…EPER). Residues 1442-1468 (AWRKVSTSPRKKSGRFSSPTWNKPDLS) form a disordered region. Position 1512 is a phosphoserine (S1512). The segment at 1544 to 1641 (LRRFDSSGNN…NSRDLEPTQK (98 aa)) is disordered. Composition is skewed to polar residues over residues 1551 to 1562 (GNNPVFSATVNN) and 1570 to 1579 (KEVSPLSSHQ). A compositionally biased stretch (basic and acidic residues) spans 1580-1590 (MTERSNSKSKT). Residues 1612–1626 (SQNTKRSSSSSNTRQ) are compositionally biased toward low complexity.

In terms of assembly, interacts with CTTN/cortactin SH3 domain. Interacts with STRN, STRN4/zinedin and MOB4/phocein; this interactions mediate the association with the STRIPAK core complex and may regulate dendritic spine distribution of the STRIPAK complex in hippocampal neurons. Activation of glutamate receptors weakens the interaction with STRN and STRN4.

The protein resides in the cytoplasm. It localises to the cell cortex. The protein localises to the cell projection. It is found in the dendritic spine. Regulates the dendritic spine distribution of CTTN/cortactin in hippocampal neurons, and thus controls dendritic spinogenesis and dendritic spine maintenance. Associates with the striatin-interacting phosphatase and kinase (STRIPAK) core complex to regulate dendritic spine distribution of the STRIPAK complex in hippocampal neurons. In Ovis aries (Sheep), this protein is Cortactin-binding protein 2 (CTTNBP2).